A 367-amino-acid chain; its full sequence is MSTAVNTIRCSLLLLGLVGIYTVWISSFRNGLFLRNEEFAGKGQLPGTPNATLRTHFTGIDTLDKALGIFVVFYWPVCQGNLRSLSLIAFPAAVGVGEMWILFALQFSQSNSPTRAMGKMAMFGMGLMLVGPGIFLPIYCSLDLSSTHRLDDSPSSAAEGHLCRNLRSCLLGGYYILVILLALPSPAVVSYGSKQGIIALLQGWPLLVSAMLWLTHLCGKDRTADFQATLSTARTSIYISAMACATISHLVPLLISLLADSSDICPGKVFVPHLAWPSRRVTSVEEGLLRFFQWDYGLGSLALLLWAVGLHIQRRQQISQGINYLRLIPEALFLSVMMSPCGAAALYLYRHNSTNCASKTGDKSGSG.

Residues I8 to F28 form a helical membrane-spanning segment. N-linked (GlcNAc...) asparagine glycosylation occurs at N50. 8 helical membrane-spanning segments follow: residues F57–V77, L85–L105, M120–C140, C169–V189, I197–L217, I239–A259, F292–I312, and L327–Y347. N-linked (GlcNAc...) asparagine glycosylation occurs at N352.

The protein belongs to the membrane-bound ascI terpene cyclase family.

It is found in the membrane. It functions in the pathway secondary metabolite biosynthesis; terpenoid biosynthesis. Its pathway is mycotoxin biosynthesis. Terpene cyclase; part of the gene cluster that mediates the biosynthesis of the neurotoxin verrucosidin, a methylated alpha-pyrone polyketide that inhibits oxidative phosphorylation in mitochondria and thereby causes neurological diseases. The carbon backbone of verrucosidin is synthesized by the HR-PKS verA, and further modified by the other verrucodidin cluster enzymes. The protein is Terpene cyclase verU1 of Penicillium polonicum.